The chain runs to 156 residues: MKLSSGWEQSVYVLLILARLPENRTMSSIALANRLKVSPSYLKKIIKSLVDEGLLRSTPGKNGGFSLNKELHDISFYDVFLAIEGRGRIFQSQGLLQNFIGSESGKAKRCAITSALDEIENTLVRTLSNVSLAQVADETQYNYNLGYLDEWIDEMD.

The HTH rrf2-type domain maps to 2 to 137 (KLSSGWEQSV…SNVSLAQVAD (136 aa)).

The sequence is that of Putative HTH-type transcriptional regulator YffB (yffB) from Lactococcus lactis subsp. lactis (strain IL1403) (Streptococcus lactis).